A 236-amino-acid polypeptide reads, in one-letter code: MATPHINAELGDFAETVLMPGDPLRAKFIAENFLEDVKQVCDVRSMLGFTGTYKGKRVSVMGHGMGIPSCSIYVHELIKDFGVKNIIRVGSCGAVHDDVKLMDIIIGMGASTDSKVNRIRFNDHDFAAIADFHLLETSVQQARLQNVNVRVGNIFSADLFYSPEEGLFDKMEKLGMLGIDMEAAGIYGVAAELGAKALTILTVSDHIKRGEKLSSEDRQKSFGEMMNVALETAVNI.

Position 5 (His-5) interacts with a purine D-ribonucleoside. Phosphate-binding positions include Gly-21, Arg-25, Arg-44, and 88–91; that span reads RVGS. A purine D-ribonucleoside-binding positions include 180 to 182 and 204 to 205; these read DME and SD. The active-site Proton donor is the Asp-205.

This sequence belongs to the PNP/UDP phosphorylase family. In terms of assembly, homohexamer; trimer of homodimers.

The enzyme catalyses a purine D-ribonucleoside + phosphate = a purine nucleobase + alpha-D-ribose 1-phosphate. It catalyses the reaction a purine 2'-deoxy-D-ribonucleoside + phosphate = a purine nucleobase + 2-deoxy-alpha-D-ribose 1-phosphate. Its function is as follows. Catalyzes the reversible phosphorolytic breakdown of the N-glycosidic bond in the beta-(deoxy)ribonucleoside molecules, with the formation of the corresponding free purine bases and pentose-1-phosphate. This chain is Purine nucleoside phosphorylase DeoD-type 2, found in Photobacterium profundum (strain SS9).